The primary structure comprises 126 residues: Protein ApaG (126 aa).

The region spanning Asn2–His126 is the ApaG domain.

This chain is Protein ApaG, found in Shewanella piezotolerans (strain WP3 / JCM 13877).